A 206-amino-acid polypeptide reads, in one-letter code: MNSTCCSACKVMKCDCAPNCIFAPHFPLTNLETFERLHRIFGAGNVFKILANLDPIQRETAVNALCYEAEALERDPIFGCVGIFNHYKNQLQNLDEQINSAKNELAAIIGLDNVPQYSSIPMPADFLTNKFSLHPYIEKMEGLDEVQKKELMQLPPVDAQVIVNEMFRKRGNIKICGGHGDACASTSGGTSATQKTLPFPQNHNQP.

One can recognise an LOB domain in the interval 4–105 (TCCSACKVMK…EQINSAKNEL (102 aa)). The tract at residues 184–206 (ASTSGGTSATQKTLPFPQNHNQP) is disordered.

It belongs to the LOB domain-containing protein family.

This Arabidopsis thaliana (Mouse-ear cress) protein is LOB domain-containing protein 35 (LBD35).